A 78-amino-acid polypeptide reads, in one-letter code: Short neurotoxin OH-5 (78 aa).

A signal peptide spans 1 to 21 (MKNLLLTFLVVTIVCLDLGYT). 4 disulfide bridges follow: cysteine 24-cysteine 40, cysteine 33-cysteine 58, cysteine 62-cysteine 70, and cysteine 71-cysteine 76.

The protein belongs to the three-finger toxin family. Short-chain subfamily. In terms of tissue distribution, expressed by the venom gland.

It localises to the secreted. Functionally, this three-finger toxin binds and inhibits the nicotinic acetylcholine receptor (nAChR). In Ophiophagus hannah (King cobra), this protein is Short neurotoxin OH-5.